The following is a 601-amino-acid chain: Elongation factor 4 (601 aa).

The 183-residue stretch at 7 to 189 folds into the tr-type G domain; it reads KNIRNFSIVA…AIVTRLPPPM (183 aa). Residues 19-24 and 136-139 each bind GTP; these read DHGKST and NKVD.

The protein belongs to the TRAFAC class translation factor GTPase superfamily. Classic translation factor GTPase family. LepA subfamily.

It is found in the cell inner membrane. It carries out the reaction GTP + H2O = GDP + phosphate + H(+). Required for accurate and efficient protein synthesis under certain stress conditions. May act as a fidelity factor of the translation reaction, by catalyzing a one-codon backward translocation of tRNAs on improperly translocated ribosomes. Back-translocation proceeds from a post-translocation (POST) complex to a pre-translocation (PRE) complex, thus giving elongation factor G a second chance to translocate the tRNAs correctly. Binds to ribosomes in a GTP-dependent manner. The polypeptide is Elongation factor 4 (Xanthobacter autotrophicus (strain ATCC BAA-1158 / Py2)).